Consider the following 63-residue polypeptide: Large ribosomal subunit protein bL28 (63 aa).

It belongs to the bacterial ribosomal protein bL28 family.

The polypeptide is Large ribosomal subunit protein bL28 (Pelobacter propionicus (strain DSM 2379 / NBRC 103807 / OttBd1)).